The sequence spans 587 residues: Ankyrin repeat and SOCS box protein 14 (587 aa).

ANK repeat units lie at residues 82–112, 117–146, 150–179, 183–212, 216–245, 248–277, 281–310, 313–342, 355–384, 385–414, and 416–449; these read IGWI…SLWE, NGET…NPNA, EGNS…DVNL, NERT…HPDP, YGFT…IFCL, DSSS…DANI, SGHL…LAAI, SGIS…DVNF, HRKS…LPNQ, DPVN…NVNY, and CRVN…DTER. The 56-residue stretch at 521-576 folds into the SOCS box domain; that stretch reads WSEIHFILTNPRSLKHLCRLKIRKCMGRLHLRCPVFMSFLPLPNRLKAYVLYKEYD.

It belongs to the ankyrin SOCS box (ASB) family. In terms of assembly, interacts with MAPRE2; this interaction promotes MAPRE2 degradation.

Its pathway is protein modification; protein ubiquitination. In terms of biological role, may be a substrate-recognition component of a SCF-like ECS (Elongin-Cullin-SOCS-box protein) E3 ubiquitin-protein ligase complex which mediates the ubiquitination and subsequent proteasomal degradation of target proteins. Plays a role in the inhibition of cardiomyocyte nuclear proliferation by mediating the ubiquitination and degradation of MAPRE2. This chain is Ankyrin repeat and SOCS box protein 14 (ASB14), found in Homo sapiens (Human).